We begin with the raw amino-acid sequence, 546 residues long: Glucose-6-phosphate isomerase (546 aa).

Glu353 serves as the catalytic Proton donor. Residues His384 and Lys512 contribute to the active site.

The protein belongs to the GPI family.

It localises to the cytoplasm. It catalyses the reaction alpha-D-glucose 6-phosphate = beta-D-fructose 6-phosphate. Its pathway is carbohydrate biosynthesis; gluconeogenesis. The protein operates within carbohydrate degradation; glycolysis; D-glyceraldehyde 3-phosphate and glycerone phosphate from D-glucose: step 2/4. Catalyzes the reversible isomerization of glucose-6-phosphate to fructose-6-phosphate. In Methylococcus capsulatus (strain ATCC 33009 / NCIMB 11132 / Bath), this protein is Glucose-6-phosphate isomerase.